A 137-amino-acid chain; its full sequence is Large ribosomal subunit protein uL16c (137 aa).

The protein belongs to the universal ribosomal protein uL16 family. As to quaternary structure, part of the 50S ribosomal subunit.

Its subcellular location is the plastid. This Cuscuta reflexa (Southern Asian dodder) protein is Large ribosomal subunit protein uL16c.